Consider the following 300-residue polypeptide: 33 kDa chaperonin (300 aa).

2 cysteine pairs are disulfide-bonded: cysteine 247–cysteine 249 and cysteine 280–cysteine 283.

Belongs to the HSP33 family. Post-translationally, under oxidizing conditions two disulfide bonds are formed involving the reactive cysteines. Under reducing conditions zinc is bound to the reactive cysteines and the protein is inactive.

The protein resides in the cytoplasm. In terms of biological role, redox regulated molecular chaperone. Protects both thermally unfolding and oxidatively damaged proteins from irreversible aggregation. Plays an important role in the bacterial defense system toward oxidative stress. The chain is 33 kDa chaperonin from Prochlorococcus marinus (strain MIT 9515).